The primary structure comprises 699 residues: Elongation factor G (699 aa).

In terms of domain architecture, tr-type G spans 8 to 283 (EHIRNIGICA…AVVDFLPSPI (276 aa)). GTP contacts are provided by residues 17–24 (AHIDAGKT), 81–85 (DTPGH), and 135–138 (NKMD).

This sequence belongs to the TRAFAC class translation factor GTPase superfamily. Classic translation factor GTPase family. EF-G/EF-2 subfamily.

It localises to the cytoplasm. In terms of biological role, catalyzes the GTP-dependent ribosomal translocation step during translation elongation. During this step, the ribosome changes from the pre-translocational (PRE) to the post-translocational (POST) state as the newly formed A-site-bound peptidyl-tRNA and P-site-bound deacylated tRNA move to the P and E sites, respectively. Catalyzes the coordinated movement of the two tRNA molecules, the mRNA and conformational changes in the ribosome. The polypeptide is Elongation factor G (Rickettsia felis (strain ATCC VR-1525 / URRWXCal2) (Rickettsia azadi)).